We begin with the raw amino-acid sequence, 290 residues long: ATP synthase gamma chain (290 aa).

Belongs to the ATPase gamma chain family. As to quaternary structure, F-type ATPases have 2 components, CF(1) - the catalytic core - and CF(0) - the membrane proton channel. CF(1) has five subunits: alpha(3), beta(3), gamma(1), delta(1), epsilon(1). CF(0) has three main subunits: a, b and c.

The protein localises to the cell inner membrane. Its function is as follows. Produces ATP from ADP in the presence of a proton gradient across the membrane. The gamma chain is believed to be important in regulating ATPase activity and the flow of protons through the CF(0) complex. In Paracoccus denitrificans (strain Pd 1222), this protein is ATP synthase gamma chain.